We begin with the raw amino-acid sequence, 251 residues long: tRNA (guanine-N(7)-)-methyltransferase (251 aa).

The segment at 1-29 is disordered; that stretch reads MTQTLSSQDPQAPAAPPMPGAAGSAPADV. The S-adenosyl-L-methionine site is built by E84, E109, D136, and D159. D159 is a catalytic residue. K163 is a binding site for substrate. Residues 165-170 form an interaction with RNA region; sequence RHNKRR. Residues D195 and 230 to 233 contribute to the substrate site; that span reads TKFE.

Belongs to the class I-like SAM-binding methyltransferase superfamily. TrmB family.

The catalysed reaction is guanosine(46) in tRNA + S-adenosyl-L-methionine = N(7)-methylguanosine(46) in tRNA + S-adenosyl-L-homocysteine. It functions in the pathway tRNA modification; N(7)-methylguanine-tRNA biosynthesis. Catalyzes the formation of N(7)-methylguanine at position 46 (m7G46) in tRNA. This Acidovorax sp. (strain JS42) protein is tRNA (guanine-N(7)-)-methyltransferase.